Consider the following 601-residue polypeptide: Glutamine--fructose-6-phosphate aminotransferase [isomerizing] (601 aa).

Cys2 functions as the Nucleophile; for GATase activity in the catalytic mechanism. In terms of domain architecture, Glutamine amidotransferase type-2 spans 2 to 216; sequence CGIVGYIGTN…DKEIVIVTKD (215 aa). SIS domains are found at residues 282 to 421 and 453 to 591; these read ILDE…EIGD and IAGE…VDKP. Lys596 functions as the For Fru-6P isomerization activity in the catalytic mechanism.

Homodimer.

It localises to the cytoplasm. It carries out the reaction D-fructose 6-phosphate + L-glutamine = D-glucosamine 6-phosphate + L-glutamate. Its function is as follows. Catalyzes the first step in hexosamine metabolism, converting fructose-6P into glucosamine-6P using glutamine as a nitrogen source. The sequence is that of Glutamine--fructose-6-phosphate aminotransferase [isomerizing] from Listeria innocua serovar 6a (strain ATCC BAA-680 / CLIP 11262).